Consider the following 753-residue polypeptide: 5-methyltetrahydropteroyltriglutamate--homocysteine methyltransferase (753 aa).

Residues 17–20 and Lys117 each bind 5-methyltetrahydropteroyltri-L-glutamate; that span reads RELK. L-homocysteine is bound by residues 431–433 and Glu484; that span reads IGS. L-methionine is bound by residues 431-433 and Glu484; that span reads IGS. Residues 515 to 516 and Trp561 contribute to the 5-methyltetrahydropteroyltri-L-glutamate site; that span reads RC. Residue Asp599 coordinates L-homocysteine. Residue Asp599 coordinates L-methionine. Glu605 provides a ligand contact to 5-methyltetrahydropteroyltri-L-glutamate. 3 residues coordinate Zn(2+): His641, Cys643, and Glu665. Catalysis depends on His694, which acts as the Proton donor. Cys726 is a binding site for Zn(2+).

This sequence belongs to the vitamin-B12 independent methionine synthase family. Requires Zn(2+) as cofactor.

It carries out the reaction 5-methyltetrahydropteroyltri-L-glutamate + L-homocysteine = tetrahydropteroyltri-L-glutamate + L-methionine. Its pathway is amino-acid biosynthesis; L-methionine biosynthesis via de novo pathway; L-methionine from L-homocysteine (MetE route): step 1/1. Catalyzes the transfer of a methyl group from 5-methyltetrahydrofolate to homocysteine resulting in methionine formation. This Shigella boydii serotype 18 (strain CDC 3083-94 / BS512) protein is 5-methyltetrahydropteroyltriglutamate--homocysteine methyltransferase.